We begin with the raw amino-acid sequence, 160 residues long: Large ribosomal subunit protein eL14 (160 aa).

The segment at serine 136 to lysine 160 is disordered. Residues aspartate 146 to lysine 160 are compositionally biased toward basic and acidic residues.

It belongs to the eukaryotic ribosomal protein eL14 family.

The protein is Large ribosomal subunit protein eL14 (RpL14) of Drosophila virilis (Fruit fly).